Consider the following 528-residue polypeptide: Importin subunit alpha-2 (528 aa).

A compositionally biased stretch (low complexity) spans 1 to 15 (MADDSASPSPSSASP). The tract at residues 1–36 (MADDSASPSPSSASPLQHHREALKSSVRNTAASRRR) is disordered. ARM repeat units lie at residues 125–165 (VPLV…NIAA), 167–206 (EPEE…NVAG), 209–248 (AELR…NLIK), 253–292 (KAAN…YLSA), 294–335 (SDRG…NLIA), 338–383 (DYMV…NIAA), 386–425 (FEHK…NLCV), and 438–477 (VEHL…LVMR).

This sequence belongs to the importin alpha family. As to quaternary structure, forms a complex with importin subunit beta-1. The whole complex, most stable and composed of importin alpha, importin beta and NLS substrate, is referred to as PTAC or pore targeting complex. In terms of tissue distribution, expressed in root, callus, and etiolated leaf. Low expression in green leaf.

The protein localises to the cytoplasm. It is found in the perinuclear region. Binds specifically and directly to substrates containing either a simple or bipartite NLS motif. Promotes docking of import substrates to the nuclear envelope. The protein is Importin subunit alpha-2 of Oryza sativa subsp. japonica (Rice).